Reading from the N-terminus, the 177-residue chain is Ribosome maturation factor RimM (177 aa).

The PRC barrel domain maps to 98 to 171 (GETIFLSEIK…AVVMDLPEGL (74 aa)).

Belongs to the RimM family. As to quaternary structure, binds ribosomal protein uS19.

It localises to the cytoplasm. Its function is as follows. An accessory protein needed during the final step in the assembly of 30S ribosomal subunit, possibly for assembly of the head region. Essential for efficient processing of 16S rRNA. May be needed both before and after RbfA during the maturation of 16S rRNA. It has affinity for free ribosomal 30S subunits but not for 70S ribosomes. This Bdellovibrio bacteriovorus (strain ATCC 15356 / DSM 50701 / NCIMB 9529 / HD100) protein is Ribosome maturation factor RimM.